Here is a 505-residue protein sequence, read N- to C-terminus: UDP-N-acetylmuramoyl-L-alanyl-D-glutamate--2,6-diaminopimelate ligase (505 aa).

Residue Ser42 participates in UDP-N-acetyl-alpha-D-muramoyl-L-alanyl-D-glutamate binding. Residue 126–132 (GTNGKTT) coordinates ATP. UDP-N-acetyl-alpha-D-muramoyl-L-alanyl-D-glutamate is bound by residues 168–169 (TT), Ser195, Gln201, and Arg203. Residue Lys235 is modified to N6-carboxylysine. Residues Arg399, 423–426 (DNPR), Gly474, and Glu478 each bind meso-2,6-diaminopimelate. Residues 423-426 (DNPR) carry the Meso-diaminopimelate recognition motif motif.

It belongs to the MurCDEF family. MurE subfamily. Requires Mg(2+) as cofactor. Post-translationally, carboxylation is probably crucial for Mg(2+) binding and, consequently, for the gamma-phosphate positioning of ATP.

The protein localises to the cytoplasm. The enzyme catalyses UDP-N-acetyl-alpha-D-muramoyl-L-alanyl-D-glutamate + meso-2,6-diaminopimelate + ATP = UDP-N-acetyl-alpha-D-muramoyl-L-alanyl-gamma-D-glutamyl-meso-2,6-diaminopimelate + ADP + phosphate + H(+). It functions in the pathway cell wall biogenesis; peptidoglycan biosynthesis. In terms of biological role, catalyzes the addition of meso-diaminopimelic acid to the nucleotide precursor UDP-N-acetylmuramoyl-L-alanyl-D-glutamate (UMAG) in the biosynthesis of bacterial cell-wall peptidoglycan. The polypeptide is UDP-N-acetylmuramoyl-L-alanyl-D-glutamate--2,6-diaminopimelate ligase (Synechocystis sp. (strain ATCC 27184 / PCC 6803 / Kazusa)).